Here is a 211-residue protein sequence, read N- to C-terminus: Thiamine-phosphate synthase (211 aa).

Residues 37–41 (QLRIK) and N69 each bind 4-amino-2-methyl-5-(diphosphooxymethyl)pyrimidine. Mg(2+) contacts are provided by D70 and D89. S108 lines the 4-amino-2-methyl-5-(diphosphooxymethyl)pyrimidine pocket. 134-136 (TQT) is a binding site for 2-[(2R,5Z)-2-carboxy-4-methylthiazol-5(2H)-ylidene]ethyl phosphate. 4-amino-2-methyl-5-(diphosphooxymethyl)pyrimidine is bound at residue K137. 2-[(2R,5Z)-2-carboxy-4-methylthiazol-5(2H)-ylidene]ethyl phosphate contacts are provided by residues G166 and 186–187 (VS).

Belongs to the thiamine-phosphate synthase family. Requires Mg(2+) as cofactor.

The enzyme catalyses 2-[(2R,5Z)-2-carboxy-4-methylthiazol-5(2H)-ylidene]ethyl phosphate + 4-amino-2-methyl-5-(diphosphooxymethyl)pyrimidine + 2 H(+) = thiamine phosphate + CO2 + diphosphate. It carries out the reaction 2-(2-carboxy-4-methylthiazol-5-yl)ethyl phosphate + 4-amino-2-methyl-5-(diphosphooxymethyl)pyrimidine + 2 H(+) = thiamine phosphate + CO2 + diphosphate. It catalyses the reaction 4-methyl-5-(2-phosphooxyethyl)-thiazole + 4-amino-2-methyl-5-(diphosphooxymethyl)pyrimidine + H(+) = thiamine phosphate + diphosphate. It functions in the pathway cofactor biosynthesis; thiamine diphosphate biosynthesis; thiamine phosphate from 4-amino-2-methyl-5-diphosphomethylpyrimidine and 4-methyl-5-(2-phosphoethyl)-thiazole: step 1/1. In terms of biological role, condenses 4-methyl-5-(beta-hydroxyethyl)thiazole monophosphate (THZ-P) and 2-methyl-4-amino-5-hydroxymethyl pyrimidine pyrophosphate (HMP-PP) to form thiamine monophosphate (TMP). This chain is Thiamine-phosphate synthase, found in Enterobacter sp. (strain 638).